The chain runs to 396 residues: Elongation factor Tu (396 aa).

A tr-type G domain is found at 10-206; it reads KPHVNVGTIG…ALDSYIPEPV (197 aa). The G1 stretch occupies residues 19–26; that stretch reads GHIDHGKT. Position 19–26 (19–26) interacts with GTP; the sequence is GHIDHGKT. Threonine 26 contributes to the Mg(2+) binding site. The tract at residues 60–64 is G2; the sequence is TKTVT. Residues 83 to 86 form a G3 region; it reads DCPG. GTP contacts are provided by residues 83–87 and 138–141; these read DCPGH and NKCD. The tract at residues 138-141 is G4; that stretch reads NKCD. The G5 stretch occupies residues 176–178; the sequence is ASL.

The protein belongs to the TRAFAC class translation factor GTPase superfamily. Classic translation factor GTPase family. EF-Tu/EF-1A subfamily. As to quaternary structure, monomer.

Its subcellular location is the cytoplasm. The catalysed reaction is GTP + H2O = GDP + phosphate + H(+). GTP hydrolase that promotes the GTP-dependent binding of aminoacyl-tRNA to the A-site of ribosomes during protein biosynthesis. The polypeptide is Elongation factor Tu (Sorangium cellulosum (strain So ce56) (Polyangium cellulosum (strain So ce56))).